The chain runs to 258 residues: Transcription factor RSL3 (258 aa).

The short motif at 98 to 105 (RKLLDVEN) is the D-box element. Residues 119-178 (ELAKSKKKQRVSSESNTVDESNTNWVDGQSLSNSSDDEKASVTSVKGKTRATKGTATDPQ) form a disordered region. Positions 130–152 (SSESNTVDESNTNWVDGQSLSNS) are enriched in polar residues. Residues 173–186 (TATDPQSLYARKRR) are basic motif. The bHLH domain occupies 173–222 (TATDPQSLYARKRREKINERLKTLQNLVPNGTKVDISTMLEEAVHYVKFL). The tract at residues 187–222 (EKINERLKTLQNLVPNGTKVDISTMLEEAVHYVKFL) is helix-loop-helix motif.

In terms of assembly, homodimer. Ubiquitinated. Ubiquitination leads to its subsequent degradation by the 26S proteasome. As to expression, expressed constitutively in roots, leaves, and flowers. Expressed in root epidermal hair cells.

The protein localises to the nucleus. Functionally, transcription factor involved in the regulation of root hair elongation. Is sufficient to promote postmitotic cell growth in root-hair cells and is a direct transcriptional target of RHD6 and RSL1. Involved in the regulation of root hair elongation in response to low phosphate. Controls root hair cell growth by regulating the expression of genes encoding proteins involved in cell signaling, cell wall modification and secretion. In Arabidopsis thaliana (Mouse-ear cress), this protein is Transcription factor RSL3.